The sequence spans 512 residues: Keratin, type I cytoskeletal 24 (512 aa).

The tract at residues 1-21 (MFCSAQKGSCSSRVSSSGAVG) is disordered. A head region spans residues 1-140 (MFCSAQKGSC…GYDGGLLSGS (140 aa)). Positions 8–21 (GSCSSRVSSSGAVG) are enriched in low complexity. Positions 141 to 176 (EKQTMQDLNDRLANYLDKVRALEEANTDLECKIKDW) are coil 1A. The region spanning 141–455 (EKQTMQDLND…RLLNGDGGGC (315 aa)) is the IF rod domain. The segment at 177-197 (YGKHGSVKGGSGRDYSQYYSI) is linker 1. Residues 198-289 (IEDLKKQILS…KNHEEEMKCM (92 aa)) are coil 1B. A linker 12 region spans residues 290–312 (QGSSGGDVTVEMNAAPGVDLTKL). The interval 313–451 (LNDMRAQYEA…ETYRRLLNGD (139 aa)) is coil 2. The segment at 452 to 512 (GGGCDYRNLV…VSNISEVKIK (61 aa)) is tail.

It belongs to the intermediate filament family. As to quaternary structure, heterotetramer of two type I and two type II keratins.

The polypeptide is Keratin, type I cytoskeletal 24 (Krt24) (Mus musculus (Mouse)).